The following is a 187-amino-acid chain: Probable cobalt-precorrin-6B C(15)-methyltransferase (decarboxylating) (187 aa).

Residues Thr15, Gly39–Gly43, Glu60, and Ala89 contribute to the S-adenosyl-L-methionine site.

It belongs to the methyltransferase superfamily. Archaeal-type CbiT family.

The enzyme catalyses Co-precorrin-6B + S-adenosyl-L-methionine = Co-precorrin-7 + S-adenosyl-L-homocysteine + CO2. Its pathway is cofactor biosynthesis; adenosylcobalamin biosynthesis; cob(II)yrinate a,c-diamide from sirohydrochlorin (anaerobic route): step 8/10. Catalyzes the methylation of C-15 in cobalt-precorrin-6B followed by the decarboxylation of C-12 to form cobalt-precorrin-7. The chain is Probable cobalt-precorrin-6B C(15)-methyltransferase (decarboxylating) from Halobacterium salinarum (strain ATCC 700922 / JCM 11081 / NRC-1) (Halobacterium halobium).